We begin with the raw amino-acid sequence, 446 residues long: Immunoglobulin heavy constant gamma 3 (446 aa).

Residues 1–98 are CH1; sequence ASTKGPSVFP…PSNTKVDKRV (98 aa). The Extracellular segment spans residues 1-397; the sequence is ASTKGPSVFP…DGELDGLWTT (397 aa). An Ig-like 1 domain is found at 6–99; sequence PSVFPLAPCS…SNTKVDKRVE (94 aa). Cysteines 27 and 83 form a disulfide. The hinge stretch occupies residues 99 to 160; sequence ELKTPLGDTT…DTPPPCPRCP (62 aa). 3 consecutive repeats follow at residues 116 to 130, 131 to 145, and 146 to 160; these read EPKS…PRCP. O-linked (GalNAc...) threonine glycosylation is found at threonine 122, threonine 137, and threonine 152. The interval 161 to 270 is CH2; it reads APELLGGPSV…PIEKTISKTK (110 aa). Ig-like domains are found at residues 168–267 and 276–372; these read PSVF…KTIS and PQVY…KSLS. Cystine bridges form between cysteine 191–cysteine 251 and cysteine 297–cysteine 355. Asparagine 227 and asparagine 322 each carry an N-linked (GlcNAc...) asparagine glycan. Residues 271–376 are CH3; it reads GQPREPQVYT…TQKSLSLSPE (106 aa). The helical transmembrane segment at 398-418 threads the bilayer; it reads ITIFITLFLLSVCYSATVTFF. The Cytoplasmic segment spans residues 419–446; it reads KVKWIFSSVVDLKQTIIPDYRNMIGQGA.

As to quaternary structure, immunoglobulins are composed of two identical heavy chains and two identical light chains; disulfide-linked. Post-translationally, N-linked glycans at Asn-322 are noncore fucosylated and the vast majority are diantennary species with a bisecting GlcNAc. Among them the most dominant glycans are HexNAc5Hex4, HexNAc5Hex5, and HexNAc5Hex5Sia1. In terms of processing, N-linked glycans at Asn-227 are diantennary core fucosylated structures without bisecting GlcNAc (HexNAc4Hex4Fuc1, HexNAc4Hex5Fuc1, and HexNAc4Hex5Fuc1Sia1). Glycosylation on Asn-227 is required for interaction with Fc receptors and ability to activate the complement pathway. (Microbial infection) Deglycosylation on Asn-227 by S.pyogenes EndoS or Endos2 endoglucosidases prevents interaction between immunoglobulin-gamma (IgG) and Fc receptors, impairing ability to activate the complement pathway. Post-translationally, O-linked glycans are non-, mono- and disialylated core 1-type O-glycans.

It localises to the secreted. The protein resides in the cell membrane. In terms of biological role, constant region of immunoglobulin heavy chains. Immunoglobulins, also known as antibodies, are membrane-bound or secreted glycoproteins produced by B lymphocytes. In the recognition phase of humoral immunity, the membrane-bound immunoglobulins serve as receptors which, upon binding of a specific antigen, trigger the clonal expansion and differentiation of B lymphocytes into immunoglobulins-secreting plasma cells. Secreted immunoglobulins mediate the effector phase of humoral immunity, which results in the elimination of bound antigens. The antigen binding site is formed by the variable domain of one heavy chain, together with that of its associated light chain. Thus, each immunoglobulin has two antigen binding sites with remarkable affinity for a particular antigen. The variable domains are assembled by a process called V-(D)-J rearrangement and can then be subjected to somatic hypermutations which, after exposure to antigen and selection, allow affinity maturation for a particular antigen. The chain is Immunoglobulin heavy constant gamma 3 from Homo sapiens (Human).